The chain runs to 250 residues: Ubiquitin-conjugating enzyme E2 6 (250 aa).

Topologically, residues 1–232 (MATKQAHKRL…DGKEPNDSSS (232 aa)) are cytoplasmic. The region spanning 5 to 167 (QAHKRLTKEY…VQENVETLEK (163 aa)) is the UBC core domain. Residue C87 is the Glycyl thioester intermediate of the active site. S139 carries the post-translational modification Phosphoserine. T178 carries the phosphothreonine modification. A disordered region spans residues 209–229 (AEQALRQSENNSKKDGKEPND). A compositionally biased stretch (basic and acidic residues) spans 219-228 (NSKKDGKEPN). A helical transmembrane segment spans residues 233–249 (MVYIGIAIFLFLVGLFM).

It belongs to the ubiquitin-conjugating enzyme family.

The protein localises to the endoplasmic reticulum membrane. It carries out the reaction S-ubiquitinyl-[E1 ubiquitin-activating enzyme]-L-cysteine + [E2 ubiquitin-conjugating enzyme]-L-cysteine = [E1 ubiquitin-activating enzyme]-L-cysteine + S-ubiquitinyl-[E2 ubiquitin-conjugating enzyme]-L-cysteine.. Its pathway is protein modification; protein ubiquitination. Its function is as follows. Catalyzes the covalent attachment of ubiquitin to other proteins. Functions in degradation of misfolded or regulated proteins localized in the endoplasmic reticulum (ER) lumen or membrane via the ubiquitin-proteasome system. Cognate E2 conjugating enzyme for the DOA10 ubiquitin ligase complex, which is part of the ERAD-C pathway responsible for the rapid degradation of membrane proteins with misfolded cytoplasmic domains. The chain is Ubiquitin-conjugating enzyme E2 6 (UBC6) from Saccharomyces cerevisiae (strain ATCC 204508 / S288c) (Baker's yeast).